Reading from the N-terminus, the 109-residue chain is Nucleoid-associated protein A1S_1684 (109 aa).

It belongs to the YbaB/EbfC family. In terms of assembly, homodimer.

The protein resides in the cytoplasm. It localises to the nucleoid. Binds to DNA and alters its conformation. May be involved in regulation of gene expression, nucleoid organization and DNA protection. The sequence is that of Nucleoid-associated protein A1S_1684 from Acinetobacter baumannii (strain ATCC 17978 / DSM 105126 / CIP 53.77 / LMG 1025 / NCDC KC755 / 5377).